A 101-amino-acid chain; its full sequence is Urease subunit beta (101 aa).

It belongs to the urease beta subunit family. As to quaternary structure, heterotrimer of UreA (gamma), UreB (beta) and UreC (alpha) subunits. Three heterotrimers associate to form the active enzyme.

It localises to the cytoplasm. The enzyme catalyses urea + 2 H2O + H(+) = hydrogencarbonate + 2 NH4(+). It participates in nitrogen metabolism; urea degradation; CO(2) and NH(3) from urea (urease route): step 1/1. The sequence is that of Urease subunit beta from Variovorax paradoxus (strain S110).